We begin with the raw amino-acid sequence, 533 residues long: Putative amidase C550.07 (533 aa).

Residues K132 and S207 each act as charge relay system in the active site. The active-site Acyl-ester intermediate is the S231.

It belongs to the amidase family.

It localises to the cytoplasm. It is found in the nucleus. It catalyses the reaction a monocarboxylic acid amide + H2O = a monocarboxylate + NH4(+). This is Putative amidase C550.07 from Schizosaccharomyces pombe (strain 972 / ATCC 24843) (Fission yeast).